The primary structure comprises 311 residues: DNA repair and recombination protein RadA (311 aa).

Position 104-111 (104-111) interacts with ATP; it reads GEFGSGKS.

This sequence belongs to the eukaryotic RecA-like protein family.

Its function is as follows. Involved in DNA repair and in homologous recombination. Binds and assemble on single-stranded DNA to form a nucleoprotein filament. Hydrolyzes ATP in a ssDNA-dependent manner and promotes DNA strand exchange between homologous DNA molecules. This Methanosphaera stadtmanae (strain ATCC 43021 / DSM 3091 / JCM 11832 / MCB-3) protein is DNA repair and recombination protein RadA.